A 434-amino-acid chain; its full sequence is Glutamate-1-semialdehyde 2,1-aminomutase (434 aa).

K266 bears the N6-(pyridoxal phosphate)lysine mark.

The protein belongs to the class-III pyridoxal-phosphate-dependent aminotransferase family. HemL subfamily. As to quaternary structure, homodimer. Pyridoxal 5'-phosphate is required as a cofactor.

Its subcellular location is the cytoplasm. It carries out the reaction (S)-4-amino-5-oxopentanoate = 5-aminolevulinate. Its pathway is porphyrin-containing compound metabolism; protoporphyrin-IX biosynthesis; 5-aminolevulinate from L-glutamyl-tRNA(Glu): step 2/2. The sequence is that of Glutamate-1-semialdehyde 2,1-aminomutase from Psychrobacter sp. (strain PRwf-1).